Reading from the N-terminus, the 676-residue chain is DNA-directed RNA polymerase subunit beta' (676 aa).

Zn(2+) is bound by residues C69, C71, C87, and C90. Mg(2+) contacts are provided by D489, D491, and D493.

It belongs to the RNA polymerase beta' chain family. RpoC1 subfamily. In plastids the minimal PEP RNA polymerase catalytic core is composed of four subunits: alpha, beta, beta', and beta''. When a (nuclear-encoded) sigma factor is associated with the core the holoenzyme is formed, which can initiate transcription. It depends on Mg(2+) as a cofactor. Zn(2+) serves as cofactor.

It localises to the plastid. The protein resides in the chloroplast. The enzyme catalyses RNA(n) + a ribonucleoside 5'-triphosphate = RNA(n+1) + diphosphate. In terms of biological role, DNA-dependent RNA polymerase catalyzes the transcription of DNA into RNA using the four ribonucleoside triphosphates as substrates. In Lolium perenne (Perennial ryegrass), this protein is DNA-directed RNA polymerase subunit beta'.